The following is a 455-amino-acid chain: Bifunctional protein GlmU (455 aa).

The tract at residues 1 to 227 (MGLSVIILAA…CEEVQGVNDR (227 aa)) is pyrophosphorylase. Residues 8-11 (LAAG), lysine 22, glutamine 73, 78-79 (GT), 100-102 (YGD), glycine 137, glutamate 152, asparagine 167, and asparagine 225 contribute to the UDP-N-acetyl-alpha-D-glucosamine site. Aspartate 102 lines the Mg(2+) pocket. Residue asparagine 225 coordinates Mg(2+). Positions 228 to 248 (WELTKLERYYQRLMAKKLSLA) are linker. Positions 249–455 (GVTIIDPERF…KGWHRPTKKE (207 aa)) are N-acetyltransferase. UDP-N-acetyl-alpha-D-glucosamine is bound by residues arginine 332 and lysine 350. Histidine 362 (proton acceptor) is an active-site residue. UDP-N-acetyl-alpha-D-glucosamine contacts are provided by tyrosine 365 and asparagine 376. Acetyl-CoA-binding positions include alanine 379, 385–386 (NY), serine 404, alanine 422, and arginine 439.

The protein in the N-terminal section; belongs to the N-acetylglucosamine-1-phosphate uridyltransferase family. This sequence in the C-terminal section; belongs to the transferase hexapeptide repeat family. As to quaternary structure, homotrimer. It depends on Mg(2+) as a cofactor.

Its subcellular location is the cytoplasm. The enzyme catalyses alpha-D-glucosamine 1-phosphate + acetyl-CoA = N-acetyl-alpha-D-glucosamine 1-phosphate + CoA + H(+). It catalyses the reaction N-acetyl-alpha-D-glucosamine 1-phosphate + UTP + H(+) = UDP-N-acetyl-alpha-D-glucosamine + diphosphate. Its pathway is nucleotide-sugar biosynthesis; UDP-N-acetyl-alpha-D-glucosamine biosynthesis; N-acetyl-alpha-D-glucosamine 1-phosphate from alpha-D-glucosamine 6-phosphate (route II): step 2/2. The protein operates within nucleotide-sugar biosynthesis; UDP-N-acetyl-alpha-D-glucosamine biosynthesis; UDP-N-acetyl-alpha-D-glucosamine from N-acetyl-alpha-D-glucosamine 1-phosphate: step 1/1. It functions in the pathway bacterial outer membrane biogenesis; LPS lipid A biosynthesis. Functionally, catalyzes the last two sequential reactions in the de novo biosynthetic pathway for UDP-N-acetylglucosamine (UDP-GlcNAc). The C-terminal domain catalyzes the transfer of acetyl group from acetyl coenzyme A to glucosamine-1-phosphate (GlcN-1-P) to produce N-acetylglucosamine-1-phosphate (GlcNAc-1-P), which is converted into UDP-GlcNAc by the transfer of uridine 5-monophosphate (from uridine 5-triphosphate), a reaction catalyzed by the N-terminal domain. The polypeptide is Bifunctional protein GlmU (Coxiella burnetii (strain Dugway 5J108-111)).